The following is a 480-amino-acid chain: Selenium-binding protein 3 (480 aa).

Positions 12 and 13 each coordinate selenite.

The protein belongs to the selenium-binding protein family. In terms of tissue distribution, expressed in young seedlings, mostly in roots.

The chain is Selenium-binding protein 3 (SBP3) from Arabidopsis thaliana (Mouse-ear cress).